We begin with the raw amino-acid sequence, 619 residues long: Dihydroxy-acid dehydratase (619 aa).

D81 lines the Mg(2+) pocket. C122 provides a ligand contact to [2Fe-2S] cluster. D123 and K124 together coordinate Mg(2+). K124 is modified (N6-carboxylysine). Residue C198 participates in [2Fe-2S] cluster binding. E494 serves as a coordination point for Mg(2+). The Proton acceptor role is filled by S520.

This sequence belongs to the IlvD/Edd family. Homodimer. It depends on [2Fe-2S] cluster as a cofactor. The cofactor is Mg(2+).

It carries out the reaction (2R)-2,3-dihydroxy-3-methylbutanoate = 3-methyl-2-oxobutanoate + H2O. The catalysed reaction is (2R,3R)-2,3-dihydroxy-3-methylpentanoate = (S)-3-methyl-2-oxopentanoate + H2O. It functions in the pathway amino-acid biosynthesis; L-isoleucine biosynthesis; L-isoleucine from 2-oxobutanoate: step 3/4. It participates in amino-acid biosynthesis; L-valine biosynthesis; L-valine from pyruvate: step 3/4. Functions in the biosynthesis of branched-chain amino acids. Catalyzes the dehydration of (2R,3R)-2,3-dihydroxy-3-methylpentanoate (2,3-dihydroxy-3-methylvalerate) into 2-oxo-3-methylpentanoate (2-oxo-3-methylvalerate) and of (2R)-2,3-dihydroxy-3-methylbutanoate (2,3-dihydroxyisovalerate) into 2-oxo-3-methylbutanoate (2-oxoisovalerate), the penultimate precursor to L-isoleucine and L-valine, respectively. This is Dihydroxy-acid dehydratase from Neisseria meningitidis serogroup C / serotype 2a (strain ATCC 700532 / DSM 15464 / FAM18).